Reading from the N-terminus, the 448-residue chain is Exodeoxyribonuclease 7 large subunit (448 aa).

It belongs to the XseA family. As to quaternary structure, heterooligomer composed of large and small subunits.

The protein localises to the cytoplasm. The enzyme catalyses Exonucleolytic cleavage in either 5'- to 3'- or 3'- to 5'-direction to yield nucleoside 5'-phosphates.. Its function is as follows. Bidirectionally degrades single-stranded DNA into large acid-insoluble oligonucleotides, which are then degraded further into small acid-soluble oligonucleotides. The protein is Exodeoxyribonuclease 7 large subunit of Shewanella baltica (strain OS155 / ATCC BAA-1091).